Consider the following 512-residue polypeptide: Maturase K (512 aa).

This sequence belongs to the intron maturase 2 family. MatK subfamily.

The protein resides in the plastid. The protein localises to the chloroplast. Functionally, usually encoded in the trnK tRNA gene intron. Probably assists in splicing its own and other chloroplast group II introns. The sequence is that of Maturase K from Platanus occidentalis (Sycamore).